Here is a 644-residue protein sequence, read N- to C-terminus: MILFITLPLLNVIISGLLSRYIGVNNIKRLNIINLFIILILLIYYYINIIKTDNEYTLKIIEWINIEYLNINYSFNLDLLSITMLIPIILISLIVNIFAWEYMKDDSHNPRFYTYLALFTLFMIILVLGDNYLILFLGWEYIGIASFLLIGFWYNNIDNIKSSLNALFINKIGDIFFIIALIYLIYIYKSLNYSLIFSLVSYINIDINNIIILCLVIAASAKSAQFGLHNWLIWAMAGPTPVSVLLHAATLVIAGIYLLMRSSPILENCPNILLFNLWLGAITSLISGLIAINSNDIKRIIALSTMSQLGIMFISIGLSSYNLTLYHVLCHSLYKALLFICAGTIIHSLNNELQDIRFMGGLLIYMPITYICMLIGSLSLMGLPSLTGYYSKDIIIESSIGIFTISGLIIYWLVVLSSLLTNIYILKLIYYSFINIPQLNKYIYNSLSLNNTYSLPFNFKFNFDKSWMAIICMIILSIGSLFIGYLLQDIYLGQGNSINGLFIYPNNLNLIETHFAINIYYKWIPIFNIFISILLIIYLYEFNYKLLYIYNNPLFYNFYILFNTRFLFDQILNNYIIRYTLYLSKSLNSLLDKGFLYTLGPNGLNYLLNLLSFNIIKFNTHLFNHYLIYISFSLLLFIYLQFDL.

18 helical membrane passes run 4 to 23 (FITL…RYIG), 30 to 49 (LNII…YINI), 78 to 100 (DLLS…IFAW), 112 to 129 (FYTY…LVLG), 133 to 155 (LILF…FWYN), 167 to 189 (LFIN…YIYK), 199 to 221 (LVSY…AASA), 234 to 256 (WAMA…IAGI), 271 to 293 (NILL…IAIN), 300 to 322 (IIAL…SSYN), 327 to 349 (HVLC…IHSL), 361 to 383 (GLLI…LMGL), 398 to 420 (SSIG…SSLL), 466 to 488 (SWMA…YLLQ), 517 to 539 (INIY…IIYL), 546 to 568 (LLYI…RFLF), 594 to 616 (GFLY…FNII), and 623 to 642 (FNHY…YLQF).

Belongs to the complex I subunit 5 family.

It is found in the mitochondrion inner membrane. It catalyses the reaction a ubiquinone + NADH + 5 H(+)(in) = a ubiquinol + NAD(+) + 4 H(+)(out). In terms of biological role, core subunit of the mitochondrial membrane respiratory chain NADH dehydrogenase (Complex I) that is believed to belong to the minimal assembly required for catalysis. Complex I functions in the transfer of electrons from NADH to the respiratory chain. The immediate electron acceptor for the enzyme is believed to be ubiquinone. This is NADH-ubiquinone oxidoreductase chain 5 (ND5) from Wickerhamomyces canadensis (Yeast).